Here is a 305-residue protein sequence, read N- to C-terminus: tRNA pseudouridine synthase B (305 aa).

The active-site Nucleophile is D50.

It belongs to the pseudouridine synthase TruB family. Type 1 subfamily.

The catalysed reaction is uridine(55) in tRNA = pseudouridine(55) in tRNA. In terms of biological role, responsible for synthesis of pseudouridine from uracil-55 in the psi GC loop of transfer RNAs. The chain is tRNA pseudouridine synthase B from Rhodococcus jostii (strain RHA1).